The following is a 457-amino-acid chain: Charged multivesicular body protein 7 (457 aa).

Coiled coils occupy residues 234-266 (QLQC…LLKE) and 331-382 (TVER…EKSV). Disordered stretches follow at residues 381 to 401 (SVPE…PPRK) and 435 to 457 (LTVS…EPAQ).

This sequence belongs to the SNF7 family.

It localises to the cytoplasm. The protein localises to the nucleus envelope. In terms of biological role, ESCRT-III-like protein required to recruit the ESCRT-III complex to the nuclear envelope during late anaphase. Together with SPAST, the ESCRT-III complex promotes nuclear envelope sealing and mitotic spindle disassembly during late anaphase. Plays a role in the endosomal sorting pathway. The protein is Charged multivesicular body protein 7 (chmp7) of Danio rerio (Zebrafish).